The sequence spans 411 residues: Adherens junction-associated protein 1 (411 aa).

The first 43 residues, 1–43 (MWIQQLLGLSSMPIRWPGRSLGSHLWILIAMLQLAVDFPSCDS), serve as a signal peptide directing secretion. Over 44–283 (LGPGPEFRLL…GETSGLAVHQ (240 aa)) the chain is Extracellular. 3 stretches are compositionally biased toward low complexity: residues 62–76 (LWSL…LPTP), 121–145 (PPAA…AGAA), and 247–264 (TPVG…SNNG). 2 disordered regions span residues 62–156 (LWSL…RGRR) and 242–270 (DPWK…IQPP). The helical transmembrane segment at 284 to 304 (IITITVSLIMVIAALITTLVL) threads the bilayer. The tract at residues 304-411 (LKNCCAPSGH…VSEKWFEISC (108 aa)) is targeting signals. Residues 305-411 (KNCCAPSGHT…VSEKWFEISC (107 aa)) are Cytoplasmic-facing.

In terms of assembly, forms a complex with CDH1 and CTNNB1; interacts directly with CTNNB1. Interacts with AP1M2 and with isoform 2 of BSG/CD147.

The protein localises to the basolateral cell membrane. The protein resides in the apical cell membrane. Its subcellular location is the cell junction. It is found in the adherens junction. In terms of biological role, plays a role in cell adhesion and cell migration. The polypeptide is Adherens junction-associated protein 1 (Ajap1) (Rattus norvegicus (Rat)).